The primary structure comprises 25 residues: Antimicrobial peptide 2 (25 aa).

As to expression, expressed by the skin glands.

It localises to the secreted. Functionally, has very strong antibacterial activity against Gram-positive bacterium S.aureus and very weak activity against Gram-negative bacterium E.coli. The chain is Antimicrobial peptide 2 from Xenopus tropicalis (Western clawed frog).